Reading from the N-terminus, the 188-residue chain is dCTP deaminase (188 aa).

DCTP contacts are provided by residues 111 to 116 (KSTYAR), 135 to 137 (TLE), Gln-156, Tyr-170, and Gln-180. Glu-137 (proton donor/acceptor) is an active-site residue.

Belongs to the dCTP deaminase family. In terms of assembly, homotrimer.

The catalysed reaction is dCTP + H2O + H(+) = dUTP + NH4(+). It participates in pyrimidine metabolism; dUMP biosynthesis; dUMP from dCTP (dUTP route): step 1/2. Functionally, catalyzes the deamination of dCTP to dUTP. In Pseudomonas putida (strain W619), this protein is dCTP deaminase.